Reading from the N-terminus, the 280-residue chain is 2-dehydro-3-deoxyphosphooctonate aldolase (280 aa).

It belongs to the KdsA family.

The protein resides in the cytoplasm. The catalysed reaction is D-arabinose 5-phosphate + phosphoenolpyruvate + H2O = 3-deoxy-alpha-D-manno-2-octulosonate-8-phosphate + phosphate. Its pathway is carbohydrate biosynthesis; 3-deoxy-D-manno-octulosonate biosynthesis; 3-deoxy-D-manno-octulosonate from D-ribulose 5-phosphate: step 2/3. The protein operates within bacterial outer membrane biogenesis; lipopolysaccharide biosynthesis. This Coxiella burnetii (strain Dugway 5J108-111) protein is 2-dehydro-3-deoxyphosphooctonate aldolase.